Consider the following 401-residue polypeptide: Sorting nexin-4 (401 aa).

Residues 17–139 (FLQCLVTEPR…AFLENPNWNN (123 aa)) enclose the PX domain. Arg-60, Ser-62, Lys-86, and Arg-105 together coordinate a 1,2-diacyl-sn-glycero-3-phospho-(1D-myo-inositol-3-phosphate). A Phosphoserine modification is found at Ser-62. Residues 190 to 292 (ISNLEGSIQK…DVEALQEYSA (103 aa)) adopt a coiled-coil conformation.

It belongs to the sorting nexin family.

The protein localises to the cytoplasm. Its subcellular location is the cytosol. It localises to the preautophagosomal structure membrane. The protein resides in the endosome membrane. Its function is as follows. Sorting nexin, involved in the separation or division of vacuoles throughout the entire life cycle of the cells. Involved in retrieval of late-Golgi SNAREs from post-Golgi endosomes to the trans-Golgi network, for cytoplasm to vacuole transport (Cvt), and autophagy of large cargos including mitophagy, pexophagy and glycophagy. The protein is Sorting nexin-4 (snx4) of Schizosaccharomyces pombe (strain 972 / ATCC 24843) (Fission yeast).